Consider the following 258-residue polypeptide: 4-hydroxy-tetrahydrodipicolinate reductase (258 aa).

Glycine 10 to methionine 15 is a binding site for NAD(+). Lysine 38 lines the NADP(+) pocket. Residues glycine 89–threonine 91 and alanine 113–methionine 116 contribute to the NAD(+) site. Histidine 146 acts as the Proton donor/acceptor in catalysis. Histidine 147 lines the (S)-2,3,4,5-tetrahydrodipicolinate pocket. The active-site Proton donor is lysine 150. Glycine 156–threonine 157 contributes to the (S)-2,3,4,5-tetrahydrodipicolinate binding site.

This sequence belongs to the DapB family.

It localises to the cytoplasm. The catalysed reaction is (S)-2,3,4,5-tetrahydrodipicolinate + NAD(+) + H2O = (2S,4S)-4-hydroxy-2,3,4,5-tetrahydrodipicolinate + NADH + H(+). The enzyme catalyses (S)-2,3,4,5-tetrahydrodipicolinate + NADP(+) + H2O = (2S,4S)-4-hydroxy-2,3,4,5-tetrahydrodipicolinate + NADPH + H(+). Its pathway is amino-acid biosynthesis; L-lysine biosynthesis via DAP pathway; (S)-tetrahydrodipicolinate from L-aspartate: step 4/4. Its function is as follows. Catalyzes the conversion of 4-hydroxy-tetrahydrodipicolinate (HTPA) to tetrahydrodipicolinate. This is 4-hydroxy-tetrahydrodipicolinate reductase from Pelagibacter ubique (strain HTCC1062).